The chain runs to 290 residues: Diaminopimelate epimerase (290 aa).

3 residues coordinate substrate: asparagine 17, glutamine 49, and asparagine 69. The Proton donor role is filled by cysteine 78. Residues 79-80 (GN), asparagine 165, asparagine 198, and 216-217 (ER) contribute to the substrate site. Residue cysteine 225 is the Proton acceptor of the active site. Residue 226–227 (GS) coordinates substrate.

This sequence belongs to the diaminopimelate epimerase family. Homodimer.

It localises to the cytoplasm. It carries out the reaction (2S,6S)-2,6-diaminopimelate = meso-2,6-diaminopimelate. The protein operates within amino-acid biosynthesis; L-lysine biosynthesis via DAP pathway; DL-2,6-diaminopimelate from LL-2,6-diaminopimelate: step 1/1. In terms of biological role, catalyzes the stereoinversion of LL-2,6-diaminopimelate (L,L-DAP) to meso-diaminopimelate (meso-DAP), a precursor of L-lysine and an essential component of the bacterial peptidoglycan. The sequence is that of Diaminopimelate epimerase from Methylocella silvestris (strain DSM 15510 / CIP 108128 / LMG 27833 / NCIMB 13906 / BL2).